The sequence spans 130 residues: Small ribosomal subunit protein uS9 (130 aa).

The protein belongs to the universal ribosomal protein uS9 family.

In Agathobacter rectalis (strain ATCC 33656 / DSM 3377 / JCM 17463 / KCTC 5835 / VPI 0990) (Eubacterium rectale), this protein is Small ribosomal subunit protein uS9.